The following is a 343-amino-acid chain: Holliday junction branch migration complex subunit RuvB (343 aa).

The tract at residues 4–193 (TDNLTAAQPQ…FGIVSRLEFY (190 aa)) is large ATPase domain (RuvB-L). ATP is bound by residues Leu32, Arg33, Gly74, Lys77, Thr78, Thr79, 140–142 (EDY), Arg183, Tyr193, and Arg230. A Mg(2+)-binding site is contributed by Thr78. Residues 194 to 264 (ENRDLTTIVS…IADAALSMLD (71 aa)) are small ATPAse domain (RuvB-S). The tract at residues 267–343 (AQGLDVMDRK…YLHFGLPVEK (77 aa)) is head domain (RuvB-H). Residues Arg322 and Arg327 each coordinate DNA.

It belongs to the RuvB family. Homohexamer. Forms an RuvA(8)-RuvB(12)-Holliday junction (HJ) complex. HJ DNA is sandwiched between 2 RuvA tetramers; dsDNA enters through RuvA and exits via RuvB. An RuvB hexamer assembles on each DNA strand where it exits the tetramer. Each RuvB hexamer is contacted by two RuvA subunits (via domain III) on 2 adjacent RuvB subunits; this complex drives branch migration. In the full resolvosome a probable DNA-RuvA(4)-RuvB(12)-RuvC(2) complex forms which resolves the HJ.

The protein resides in the cytoplasm. It carries out the reaction ATP + H2O = ADP + phosphate + H(+). In terms of biological role, the RuvA-RuvB-RuvC complex processes Holliday junction (HJ) DNA during genetic recombination and DNA repair, while the RuvA-RuvB complex plays an important role in the rescue of blocked DNA replication forks via replication fork reversal (RFR). RuvA specifically binds to HJ cruciform DNA, conferring on it an open structure. The RuvB hexamer acts as an ATP-dependent pump, pulling dsDNA into and through the RuvAB complex. RuvB forms 2 homohexamers on either side of HJ DNA bound by 1 or 2 RuvA tetramers; 4 subunits per hexamer contact DNA at a time. Coordinated motions by a converter formed by DNA-disengaged RuvB subunits stimulates ATP hydrolysis and nucleotide exchange. Immobilization of the converter enables RuvB to convert the ATP-contained energy into a lever motion, pulling 2 nucleotides of DNA out of the RuvA tetramer per ATP hydrolyzed, thus driving DNA branch migration. The RuvB motors rotate together with the DNA substrate, which together with the progressing nucleotide cycle form the mechanistic basis for DNA recombination by continuous HJ branch migration. Branch migration allows RuvC to scan DNA until it finds its consensus sequence, where it cleaves and resolves cruciform DNA. The polypeptide is Holliday junction branch migration complex subunit RuvB (Neisseria meningitidis serogroup C (strain 053442)).